We begin with the raw amino-acid sequence, 580 residues long: MEIQFSYESQDHHFLSDGETKIKIGEPATEEEMTGKIGTVTEESGSLEEDVPHDSRGKEFREFGEELNDQMLFRRRQYNCDECDQSFAWSTGLIRHQRTHWKPYECEECGKAFRMSSALVLHQRIHTGEKPYPCSWCIKSFSRSSDLIKHQRVHTGEKPYKCDECGKAFSQSSDLMIHQRIHTGEKPYQCSHCSKSFSQHSGMVKHLRIHTGEKPYMCNHCYKHFSQSSDLIKHQRIHTGEKPYKCDVCGKAFSQSSDRILHQRIHTGEKPYPCAQCNKSFSQNSDLIKHRRIHTGEKPYKCSECGKAFNQSSVLILHQRIHTGEKPYPCNQCTKSFSRLSDLINHQRIHTGEKPYPCSQCSKMFSRRSDLVKHYRIHTGEKPYECDKCGKTFSQSSNLILHQRIHTGEKPYPCNSCSKSFSRGSDLIKHQRVHTGEKPYTCNLCSKSFSQSSDLTKHQRVHSGEKPYHCSSCNKAFRQSSDLILHHRVHTGERPYACTQCPRSFSQKSDLIKHQRIHTGEKPYKCMCGKAFSQCSAFTLHQRIHTGEKPYPCAQCGKSFSQRSDLVNHQRVHADQKLQM.

C2H2-type zinc fingers lie at residues 78–100 (YNCDECDQSFAWSTGLIRHQRTH), 104–126 (YECEECGKAFRMSSALVLHQRIH), 132–154 (YPCSWCIKSFSRSSDLIKHQRVH), 160–182 (YKCDECGKAFSQSSDLMIHQRIH), 188–210 (YQCSHCSKSFSQHSGMVKHLRIH), 216–238 (YMCNHCYKHFSQSSDLIKHQRIH), 244–266 (YKCDVCGKAFSQSSDRILHQRIH), 272–294 (YPCAQCNKSFSQNSDLIKHRRIH), 300–322 (YKCSECGKAFNQSSVLILHQRIH), 328–350 (YPCNQCTKSFSRLSDLINHQRIH), 356–378 (YPCSQCSKMFSRRSDLVKHYRIH), 384–406 (YECDKCGKTFSQSSNLILHQRIH), 412–434 (YPCNSCSKSFSRGSDLIKHQRVH), 440–462 (YTCNLCSKSFSQSSDLTKHQRVH), 468–490 (YHCSSCNKAFRQSSDLILHHRVH), 496–518 (YACTQCPRSFSQKSDLIKHQRIH), 524–545 (YKCMCGKAFSQCSAFTLHQRIH), and 551–573 (YPCAQCGKSFSQRSDLVNHQRVH).

The protein belongs to the krueppel C2H2-type zinc-finger protein family. In terms of tissue distribution, selectively expressed in adult testis.

The protein localises to the nucleus. In terms of biological role, may act to control gene activity during the pachytene stage of meiotic prophase. May function as a transcription activator. This Mus musculus (Mouse) protein is Zinc finger protein 271 (Znf271).